We begin with the raw amino-acid sequence, 251 residues long: Probable transcriptional regulatory protein cauri_1421 (251 aa).

The segment at 1–21 (MAGHSKWATTKHKKAANDAKR) is disordered.

It belongs to the TACO1 family.

The protein localises to the cytoplasm. This Corynebacterium aurimucosum (strain ATCC 700975 / DSM 44827 / CIP 107346 / CN-1) (Corynebacterium nigricans) protein is Probable transcriptional regulatory protein cauri_1421.